Here is a 473-residue protein sequence, read N- to C-terminus: ATP synthase subunit beta (473 aa).

An ATP-binding site is contributed by 158 to 165 (GGAGVGKT).

Belongs to the ATPase alpha/beta chains family. F-type ATPases have 2 components, CF(1) - the catalytic core - and CF(0) - the membrane proton channel. CF(1) has five subunits: alpha(3), beta(3), gamma(1), delta(1), epsilon(1). CF(0) has three main subunits: a(1), b(2) and c(9-12). The alpha and beta chains form an alternating ring which encloses part of the gamma chain. CF(1) is attached to CF(0) by a central stalk formed by the gamma and epsilon chains, while a peripheral stalk is formed by the delta and b chains.

The protein localises to the cell membrane. It carries out the reaction ATP + H2O + 4 H(+)(in) = ADP + phosphate + 5 H(+)(out). Its function is as follows. Produces ATP from ADP in the presence of a proton gradient across the membrane. The catalytic sites are hosted primarily by the beta subunits. This Geobacillus kaustophilus (strain HTA426) protein is ATP synthase subunit beta.